The primary structure comprises 163 residues: Cytochrome c-type biogenesis protein CcmE (163 aa).

Over 1–8 (MNPRRKKR) the chain is Cytoplasmic. Residues 9-29 (LTIILAISAGLAAVIGLVLYA) traverse the membrane as a helical; Signal-anchor for type II membrane protein segment. Residues 30-163 (LSQNIDLFYT…TEAQLKGSKQ (134 aa)) are Periplasmic-facing. His-131 and Tyr-135 together coordinate heme.

This sequence belongs to the CcmE/CycJ family.

It is found in the cell inner membrane. Its function is as follows. Heme chaperone required for the biogenesis of c-type cytochromes. Transiently binds heme delivered by CcmC and transfers the heme to apo-cytochromes in a process facilitated by CcmF and CcmH. This Aeromonas hydrophila subsp. hydrophila (strain ATCC 7966 / DSM 30187 / BCRC 13018 / CCUG 14551 / JCM 1027 / KCTC 2358 / NCIMB 9240 / NCTC 8049) protein is Cytochrome c-type biogenesis protein CcmE.